A 625-amino-acid chain; its full sequence is Glucose dehydrogenase [FAD, quinone] (625 aa).

Residues 1–42 form the signal peptide; the sequence is MATSPSSCDCLVGVPTGPTLASTCGGSAFMLFMGLLEVFIRS. FAD is bound at residue 66–95; the sequence is DFIVIGGGSAGSVVASRLSEVPQWKVLLIE. H544 (proton acceptor) is an active-site residue. Position 613 (U613) is a non-standard amino acid, selenocysteine.

It belongs to the GMC oxidoreductase family. It depends on FAD as a cofactor.

The protein localises to the secreted. The catalysed reaction is a quinone + D-glucose = D-glucono-1,5-lactone + a quinol. This is Glucose dehydrogenase [FAD, quinone] (Gld) from Drosophila pseudoobscura pseudoobscura (Fruit fly).